Consider the following 659-residue polypeptide: Threonine--tRNA ligase (659 aa).

One can recognise a TGS domain in the interval 1–60 (MTVYLPDGKPLELPEGATAKDVARALGEGWERRAVGAIVDGELYDLLKPLPQGAKVRLLT). The catalytic stretch occupies residues 252–552 (DHRRLGRELE…LIEHFAGDFP (301 aa)). Zn(2+) contacts are provided by Cys-349, His-400, and His-529.

Belongs to the class-II aminoacyl-tRNA synthetase family. In terms of assembly, homodimer. It depends on Zn(2+) as a cofactor.

The protein resides in the cytoplasm. The catalysed reaction is tRNA(Thr) + L-threonine + ATP = L-threonyl-tRNA(Thr) + AMP + diphosphate + H(+). Its function is as follows. Catalyzes the attachment of threonine to tRNA(Thr) in a two-step reaction: L-threonine is first activated by ATP to form Thr-AMP and then transferred to the acceptor end of tRNA(Thr). Also edits incorrectly charged L-seryl-tRNA(Thr). The sequence is that of Threonine--tRNA ligase from Thermus thermophilus (strain ATCC BAA-163 / DSM 7039 / HB27).